We begin with the raw amino-acid sequence, 71 residues long: Large ribosomal subunit protein uL29 (71 aa).

Belongs to the universal ribosomal protein uL29 family.

The sequence is that of Large ribosomal subunit protein uL29 from Rickettsia typhi (strain ATCC VR-144 / Wilmington).